Here is a 130-residue protein sequence, read N- to C-terminus: Mating-type-like protein A1 (130 aa).

The segment at residues 68-127 (TYTTRKPLPAKAKLQLVETFSKKRYLTRCEKHQLAVQCGITTNQVQIWFANRRKRSKDLN) is a DNA-binding region (homeobox).

Belongs to the MATA1 family.

It is found in the nucleus. Functionally, mating type proteins are sequence specific DNA-binding proteins that act as master switches in yeast differentiation by controlling gene expression in a cell type-specific fashion. The polypeptide is Mating-type-like protein A1 (MTL1A1) (Candida glabrata (strain ATCC 2001 / BCRC 20586 / JCM 3761 / NBRC 0622 / NRRL Y-65 / CBS 138) (Yeast)).